A 348-amino-acid chain; its full sequence is Dehydrogenase orsE (348 aa).

Residue 43–46 (LDTH) coordinates NADP(+). 130 to 137 (FAVEAAVC) contributes to the substrate binding site. NADP(+) is bound by residues 180–183 (SSSV), 203–206 (GAHN), and 272–273 (VH). A substrate-binding site is contributed by 292 to 296 (NDIAT). 339–340 (VS) provides a ligand contact to NADP(+).

This sequence belongs to the zinc-containing alcohol dehydrogenase family. As to quaternary structure, monomer.

Dehydrogenase; part of the gene cluster that mediates the biosynthesis of orsellinic acid, as well as of the cathepsin K inhibitors F9775 A and F9775 B. The non-reducing polyketide synthase orsA produces orsellinic acid by condensing acetyl-CoA with 3 malonyl-CoA units. Further modifications by the decarboxylase orsB and the tyrosinase-like protein orsC lead to the production of F9775 A and F9775 B. The functions of orsD and orsE remain unclear since only orsB and orsC are required to convert orsellinic acid into F9775 A and F9775 B. The chain is Dehydrogenase orsE from Emericella nidulans (strain FGSC A4 / ATCC 38163 / CBS 112.46 / NRRL 194 / M139) (Aspergillus nidulans).